A 391-amino-acid polypeptide reads, in one-letter code: MTLNVYHIIFIHNLWYGMAHIITLPKRRNCSLSCPSRVRGPEHLAVDHTLSSPALAKPNLPVLSTPEPCSPPANPYPRHQIQFPQQYTPYCTHNEGFINSPHSQSYQYIHFIHISPLPRMNTTHVPEPHRTEQHTENQRHWRKILDIAPIVSIAFPAAMYFIFTKDSFEDSLFLRFITLLLPFSYSAVQYALLHTNWKSHNKPEGILQSMLYYTLNLLLLAFTIISILSIIAFTLAEWEGDDWENNDDPIIFSFILPSFTVPLTYLLSVSCRLVPGHIGFTDTGINVLIDILILLCSTGNLVPAFDEVKHCYYFAIISSILILIRLLREKHGPSEKSALPTAPWRVAILVLILIFAALIYLFMMWVSIDILSDHFALLARARSTPVSKPRQ.

It belongs to the UPF0328 family.

In Encephalitozoon cuniculi (strain GB-M1) (Microsporidian parasite), this protein is UPF0328 protein ECU06_1650.